The primary structure comprises 683 residues: Protein kinase C eta type (683 aa).

Residues 1–118 (MSSGTMKFNG…LRTAGTSDTF (118 aa)) form the C2 domain. Residues S28 and S32 each carry the phosphoserine modification. Phorbol-ester/DAG-type zinc fingers lie at residues 171–222 (GHKF…VTAC) and 245–295 (PHKF…APNC). S317 carries the phosphoserine modification. The region spanning 355-614 (FEFIRVLGKG…EHEILRHPFF (260 aa)) is the Protein kinase domain. ATP-binding positions include 361–369 (LGKGSFGKV) and K384. The Proton acceptor role is filled by D479. T513 bears the Phosphothreonine; by PDPK1 mark. Positions 615–683 (KEIDWAQLNH…FSYVSPELQL (69 aa)) constitute an AGC-kinase C-terminal domain. At T656 the chain carries Phosphothreonine. S675 is modified (phosphoserine).

The protein belongs to the protein kinase superfamily. AGC Ser/Thr protein kinase family. PKC subfamily. Interacts with FYN. Interacts with RALA. Interacts with DGKQ. As to expression, predominantly expressed in lung and skin.

It localises to the cytoplasm. The enzyme catalyses L-seryl-[protein] + ATP = O-phospho-L-seryl-[protein] + ADP + H(+). It catalyses the reaction L-threonyl-[protein] + ATP = O-phospho-L-threonyl-[protein] + ADP + H(+). Novel PKCs (PRKCD, PRKCE, PRKCH and PRKCQ) are calcium-insensitive, but activated by diacylglycerol (DAG) and phosphatidylserine. Three specific sites; Thr-513 (activation loop of the kinase domain), Thr-656 (turn motif) and Ser-675 (hydrophobic region), need to be phosphorylated for its full activation. Calcium-independent, phospholipid- and diacylglycerol (DAG)-dependent serine/threonine-protein kinase that is involved in the regulation of cell differentiation in keratinocytes and pre-B cell receptor, mediates regulation of epithelial tight junction integrity and foam cell formation, and is required for glioblastoma proliferation and apoptosis prevention in MCF-7 cells. In keratinocytes, binds and activates the tyrosine kinase FYN, which in turn blocks epidermal growth factor receptor (EGFR) signaling and leads to keratinocyte growth arrest and differentiation. Associates with the cyclin CCNE1-CDK2-CDKN1B complex and inhibits CDK2 kinase activity, leading to RB1 dephosphorylation and thereby G1 arrest in keratinocytes. In association with RALA activates actin depolymerization, which is necessary for keratinocyte differentiation. In the pre-B cell receptor signaling, functions downstream of BLNK by up-regulating IRF4, which in turn activates L chain gene rearrangement. Regulates epithelial tight junctions (TJs) by phosphorylating occludin (OCLN) on threonine residues, which is necessary for the assembly and maintenance of TJs. In association with PLD2 and via TLR4 signaling, is involved in lipopolysaccharide (LPS)-induced RGS2 down-regulation and foam cell formation. Upon PMA stimulation, mediates glioblastoma cell proliferation by activating the mTOR pathway, the PI3K/AKT pathway and the ERK1-dependent phosphorylation of ELK1. Involved in the protection of glioblastoma cells from irradiation-induced apoptosis by preventing caspase-9 activation. In camptothecin-treated MCF-7 cells, regulates NF-kappa-B upstream signaling by activating IKBKB, and confers protection against DNA damage-induced apoptosis. Promotes oncogenic functions of ATF2 in the nucleus while blocking its apoptotic function at mitochondria. Phosphorylates ATF2 which promotes its nuclear retention and transcriptional activity and negatively regulates its mitochondrial localization. In Mus musculus (Mouse), this protein is Protein kinase C eta type (Prkch).